The chain runs to 352 residues: Protein RecA (352 aa).

67–74 is a binding site for ATP; the sequence is GPESSGKT.

The protein belongs to the RecA family.

It is found in the cytoplasm. Functionally, can catalyze the hydrolysis of ATP in the presence of single-stranded DNA, the ATP-dependent uptake of single-stranded DNA by duplex DNA, and the ATP-dependent hybridization of homologous single-stranded DNAs. It interacts with LexA causing its activation and leading to its autocatalytic cleavage. This Klebsiella pneumoniae subsp. pneumoniae (strain ATCC 700721 / MGH 78578) protein is Protein RecA.